We begin with the raw amino-acid sequence, 499 residues long: Putative antiporter subunit mnhD2 (499 aa).

Helical transmembrane passes span 3–23 (SNLLVLPILLPLLCALVLVFT), 32–52 (ILYIGTMSVNTVISLCLLIYV), 78–98 (LSLVMVTVASFVVTLIMSYGF), 108–128 (YYLPTFILFLTTGVIGSFLTS), 130–150 (LFNLYVMFEIMLLASFVLVTL), 161–181 (IIYVVLNIVGSWLFLLGIGLL), 206–226 (IIIISIVFIVAFGSKAALVLF), 240–260 (LAALFAALMTKVGAYALIRFF), 273–293 (PLLVFMSCITMLIGAFGVIAY), 308–328 (IGFVILGLGSNTFAGVHGAIF), 330–350 (LANDIIVKTMLFFIIGSLVYM), 368–388 (FFGVAFVVMIFAIGGVPPFSG), 403–423 (GNFIGLALMIITSLLAMYSLF), and 450–470 (TILGILVAVVLAMGIAAPVVM).

Belongs to the CPA3 antiporters (TC 2.A.63) subunit D family. As to quaternary structure, may form a heterooligomeric complex that consists of seven subunits: mnhA2, mnhB2, mnhC2, mnhD2, mnhE2, mnhF2 and mnhG2.

It localises to the cell membrane. In Staphylococcus haemolyticus (strain JCSC1435), this protein is Putative antiporter subunit mnhD2 (mnhD2).